Consider the following 194-residue polypeptide: dTTP/UTP pyrophosphatase (194 aa).

Asp73 (proton acceptor) is an active-site residue.

The protein belongs to the Maf family. YhdE subfamily. It depends on a divalent metal cation as a cofactor.

It localises to the cytoplasm. The catalysed reaction is dTTP + H2O = dTMP + diphosphate + H(+). The enzyme catalyses UTP + H2O = UMP + diphosphate + H(+). Functionally, nucleoside triphosphate pyrophosphatase that hydrolyzes dTTP and UTP. May have a dual role in cell division arrest and in preventing the incorporation of modified nucleotides into cellular nucleic acids. The sequence is that of dTTP/UTP pyrophosphatase from Clostridium botulinum (strain Kyoto / Type A2).